Here is a 450-residue protein sequence, read N- to C-terminus: E3 ubiquitin-protein ligase XB3 (450 aa).

ANK repeat units lie at residues glycine 11–arginine 40, aspartate 46–alanine 75, histidine 79–methionine 108, histidine 113–valine 142, histidine 158–alanine 187, and proline 195–arginine 225. Residues isoleucine 291 to aspartate 312 are disordered. The RING-type zinc-finger motif lies at cysteine 323–arginine 372. The segment at serine 385 to leucine 450 is disordered.

As to quaternary structure, interacts (via ankyrin repeats) with XA21. Phosphorylated by XA21.

It carries out the reaction S-ubiquitinyl-[E2 ubiquitin-conjugating enzyme]-L-cysteine + [acceptor protein]-L-lysine = [E2 ubiquitin-conjugating enzyme]-L-cysteine + N(6)-ubiquitinyl-[acceptor protein]-L-lysine.. The protein operates within protein modification; protein ubiquitination. E3 ubiquitin-protein ligase required for full accumulation of the LRR receptor kinase XA21 and XA21-mediated disease resistance. Binding to XA21 may stabilize the receptor kinase and maintain its protein level. Autoubiquitinated in vitro. This Oryza sativa subsp. japonica (Rice) protein is E3 ubiquitin-protein ligase XB3 (XB3).